Consider the following 75-residue polypeptide: Sec-independent protein translocase protein TatA (75 aa).

Residues 1–21 (MGSMSIWHWIVVLAVVLLLFG) traverse the membrane as a helical segment. Residues 43–75 (MAEDDDAPAKPAEPPRAVPHQATPAPESEKKAV) form a disordered region.

This sequence belongs to the TatA/E family. In terms of assembly, the Tat system comprises two distinct complexes: a TatABC complex, containing multiple copies of TatA, TatB and TatC subunits, and a separate TatA complex, containing only TatA subunits. Substrates initially bind to the TatABC complex, which probably triggers association of the separate TatA complex to form the active translocon.

It is found in the cell inner membrane. Functionally, part of the twin-arginine translocation (Tat) system that transports large folded proteins containing a characteristic twin-arginine motif in their signal peptide across membranes. TatA could form the protein-conducting channel of the Tat system. The polypeptide is Sec-independent protein translocase protein TatA (Azorhizobium caulinodans (strain ATCC 43989 / DSM 5975 / JCM 20966 / LMG 6465 / NBRC 14845 / NCIMB 13405 / ORS 571)).